The chain runs to 216 residues: Nucleoside triphosphate pyrophosphatase (216 aa).

The active-site Proton acceptor is aspartate 82.

Belongs to the Maf family. It depends on a divalent metal cation as a cofactor.

The protein resides in the cytoplasm. The catalysed reaction is a ribonucleoside 5'-triphosphate + H2O = a ribonucleoside 5'-phosphate + diphosphate + H(+). It carries out the reaction a 2'-deoxyribonucleoside 5'-triphosphate + H2O = a 2'-deoxyribonucleoside 5'-phosphate + diphosphate + H(+). Its function is as follows. Nucleoside triphosphate pyrophosphatase. May have a dual role in cell division arrest and in preventing the incorporation of modified nucleotides into cellular nucleic acids. In Mycobacterium ulcerans (strain Agy99), this protein is Nucleoside triphosphate pyrophosphatase.